A 190-amino-acid chain; its full sequence is Prostaglandin-H2 D-isomerase (190 aa).

A signal peptide spans 1–22; the sequence is MATHHTLWMGLALLGVLGDLQA. An N-linked (GlcNAc...) asparagine glycan is attached at Asn-51. Residue Cys-65 is the Nucleophile of the active site. Asn-78 is a glycosylation site (N-linked (GlcNAc...) asparagine). Cysteines 89 and 186 form a disulfide.

This sequence belongs to the calycin superfamily. Lipocalin family. As to quaternary structure, monomer.

The protein resides in the rough endoplasmic reticulum. It localises to the nucleus membrane. Its subcellular location is the golgi apparatus. The protein localises to the cytoplasm. It is found in the perinuclear region. The protein resides in the secreted. The enzyme catalyses prostaglandin H2 = prostaglandin D2. Catalyzes the conversion of PGH2 to PGD2, a prostaglandin involved in smooth muscle contraction/relaxation and a potent inhibitor of platelet aggregation. Involved in a variety of CNS functions, such as sedation, NREM sleep and PGE2-induced allodynia, and may have an anti-apoptotic role in oligodendrocytes. Binds small non-substrate lipophilic molecules, including biliverdin, bilirubin, retinal, retinoic acid and thyroid hormone, and may act as a scavenger for harmful hydrophobic molecules and as a secretory retinoid and thyroid hormone transporter. Possibly involved in development and maintenance of the blood-brain, blood-retina, blood-aqueous humor and blood-testis barrier. It is likely to play important roles in both maturation and maintenance of the central nervous system and male reproductive system. Involved in PLA2G3-dependent maturation of mast cells. PLA2G3 is secreted by immature mast cells and acts on nearby fibroblasts upstream to PTDGS to synthesize PGD2, which in turn promotes mast cell maturation and degranulation via PTGDR. This is Prostaglandin-H2 D-isomerase (PTGDS) from Gorilla gorilla gorilla (Western lowland gorilla).